Here is a 602-residue protein sequence, read N- to C-terminus: Ligand-dependent nuclear receptor corepressor-like protein (602 aa).

Residues 104–124 are disordered; that stretch reads PSLDSSQSTPTEELSSQGQSN. The segment covering 106 to 124 has biased composition (polar residues); sequence LDSSQSTPTEELSSQGQSN. Glycyl lysine isopeptide (Lys-Gly) (interchain with G-Cter in SUMO2) cross-links involve residues K242, K319, K340, and K397. Disordered stretches follow at residues 495-521 and 564-602; these read TVDGTSENTEDGLDRKDSKQPRKKRGR and ERSGTLKTPPKKKLRLPDTGLYNMTDSGTGSCKNSSKPV. An HTH psq-type domain is found at 516-568; that stretch reads RKKRGRYRQYDHEIMEEAIAMVMSGKMSVSKAQGIYGVPHSTLEYKVKERSGT. Positions 544–564 form a DNA-binding region, H-T-H motif; it reads VSKAQGIYGVPHSTLEYKVKE. A compositionally biased stretch (polar residues) spans 585–602; it reads YNMTDSGTGSCKNSSKPV.

It localises to the nucleus. Functionally, may act as transcription activator that binds DNA elements with the sequence 5'-CCCTATCGATCGATCTCTACCT-3'. May play a role in spermatogenesis. The polypeptide is Ligand-dependent nuclear receptor corepressor-like protein (LCORL) (Homo sapiens (Human)).